The primary structure comprises 509 residues: Maturase K (509 aa).

Belongs to the intron maturase 2 family. MatK subfamily.

The protein localises to the plastid. It localises to the chloroplast. In terms of biological role, usually encoded in the trnK tRNA gene intron. Probably assists in splicing its own and other chloroplast group II introns. In Atropa belladonna (Belladonna), this protein is Maturase K.